Here is a 116-residue protein sequence, read N- to C-terminus: MITMRCKMLTAAAVMLAMLTAGCSTLEKVVYRPDINQGNYLSPIDASKIHKGMTQQQVAYTLGTPMLQDPFGTQTWFYVFRQQPGHEKITQQTLTLTFDSSGVLTDIKNEPALTGS.

The first 22 residues, 1–22 (MITMRCKMLTAAAVMLAMLTAG), serve as a signal peptide directing secretion. Cys23 carries the N-palmitoyl cysteine lipid modification. The S-diacylglycerol cysteine moiety is linked to residue Cys23.

This sequence belongs to the BamE family. As to quaternary structure, part of the Bam complex, which is composed of the outer membrane protein BamA, and four lipoproteins BamB, BamC, BamD and BamE.

The protein localises to the cell outer membrane. In terms of biological role, part of the outer membrane protein assembly complex, which is involved in assembly and insertion of beta-barrel proteins into the outer membrane. The chain is Outer membrane protein assembly factor BamE from Yersinia pestis.